The following is a 335-amino-acid chain: 2-acylglycerol O-acyltransferase 1 (335 aa).

2 helical membrane-spanning segments follow: residues 24 to 44 (WVLS…MLVL) and 104 to 124 (YIFG…NFCT). The N-linked (GlcNAc...) asparagine glycan is linked to asparagine 180.

The protein belongs to the diacylglycerol acyltransferase family. As to expression, expressed at high level in kidney and stomach. Expressed at lower level in brown and white adipose tissue, uterus and liver. Not detected in small intestine.

It is found in the endoplasmic reticulum membrane. The catalysed reaction is a 2-acylglycerol + an acyl-CoA = a 1,2-diacylglycerol + CoA. The enzyme catalyses 2-(9Z-octadecenoyl)-glycerol + butanoyl-CoA = 1-butanoyl-2-(9Z-octadecenoyl)-glycerol + CoA. It carries out the reaction 2-(9Z-octadecenoyl)-glycerol + octanoyl-CoA = 1-octanoyl-2-(9Z-octadecenoyl)-glycerol + CoA. It catalyses the reaction 2-(9Z-octadecenoyl)-glycerol + dodecanoyl-CoA = 1-dodecanoyl-2-(9Z-octadecenoyl)-glycerol + CoA. The catalysed reaction is 2-(9Z-octadecenoyl)-glycerol + tetradecanoyl-CoA = 1-tetradecanoyl-2-(9Z-octadecenoyl)-glycerol + CoA. The enzyme catalyses 2-(9Z-octadecenoyl)-glycerol + hexadecanoyl-CoA = 1-hexadecanoyl-2-(9Z-octadecenoyl)-glycerol + CoA. It carries out the reaction 2-(9Z-octadecenoyl)-glycerol + octadecanoyl-CoA = 1-octadecanoyl-2-(9Z-octadecenoyl)-glycerol + CoA. It catalyses the reaction eicosanoyl-CoA + 2-(9Z-octadecenoyl)-glycerol = 1-eicosanoyl-2-(9Z-octadecenoyl)-glycerol + CoA. The catalysed reaction is 2-(9Z-octadecenoyl)-glycerol + (9Z)-octadecenoyl-CoA = 1,2-di-(9Z-octadecenoyl)-glycerol + CoA. The enzyme catalyses 2-(9Z-octadecenoyl)-glycerol + (9Z,12Z)-octadecadienoyl-CoA = 1-(9Z,12Z-octadecadienoyl)-2-(9Z-octadecenoyl)-glycerol + CoA. It carries out the reaction 2-(9Z-octadecenoyl)-glycerol + (5Z,8Z,11Z,14Z)-eicosatetraenoyl-CoA = 1-(5Z,8Z,11Z,14Z-eicosatetraenoyl)-2-(9Z-octadecenoyl)-glycerol + CoA. It catalyses the reaction a 2-acylglycerol + an acyl-CoA = a 1,2-diacyl-sn-glycerol + CoA. The catalysed reaction is a 2-acylglycerol + an acyl-CoA = a 2,3-diacyl-sn-glycerol + CoA. The enzyme catalyses a 1-acylglycerol + an acyl-CoA = a 1,2-diacylglycerol + CoA. It carries out the reaction 1-dodecanoylglycerol + (9Z)-octadecenoyl-CoA = 1-dodecanoyl-2-(9Z-octadecenoyl)-glycerol + CoA. It catalyses the reaction 1-tetradecanoylglycerol + (9Z)-octadecenoyl-CoA = 1-tetradecanoyl-2-(9Z-octadecenoyl)-glycerol + CoA. The catalysed reaction is 1-hexadecanoylglycerol + (9Z)-octadecenoyl-CoA = 1-hexadecanoyl-2-(9Z-octadecenoyl)-glycerol + CoA. The enzyme catalyses 1-(9Z-octadecenoyl)-glycerol + (9Z)-octadecenoyl-CoA = 1,2-di-(9Z-octadecenoyl)-glycerol + CoA. It carries out the reaction 1-(9Z,12Z-octadecadienoyl)-glycerol + (9Z)-octadecenoyl-CoA = 1-(9Z,12Z-octadecadienoyl)-2-(9Z-octadecenoyl)-glycerol + CoA. It catalyses the reaction 1-(9Z,12Z,15Z-octadecatrienoyl)-glycerol + (9Z)-octadecenoyl-CoA = 1-(9Z,12Z,15Z-octadecatrienoyl)-2-(9Z-octadecenoyl)-glycerol + CoA. The catalysed reaction is 1-(5Z,8Z,11Z,14Z-eicosatetraenoyl)-glycerol + (9Z)-octadecenoyl-CoA = 1-(5Z,8Z,11Z,14Z-eicosatetraenoyl)-2-(9Z-octadecenoyl)-glycerol + CoA. The enzyme catalyses a 1-acylglycerol + an acyl-CoA = a 1,3-diacylglycerol + CoA. It carries out the reaction 1-dodecanoylglycerol + (9Z)-octadecenoyl-CoA = 1-dodecanoyl-3-(9Z-octadecenoyl)-glycerol + CoA. It catalyses the reaction 1-hexadecanoylglycerol + (9Z)-octadecenoyl-CoA = 1-(9Z-octadecenoyl)-3-hexadecanoylglycerol + CoA. The catalysed reaction is 1-octadecanoylglycerol + (9Z)-octadecenoyl-CoA = 1-octadecanoyl-3-(9Z-octadecenoyl)-glycerol + CoA. The enzyme catalyses 1-(9Z-octadecenoyl)-sn-glycerol + (9Z)-octadecenoyl-CoA = 1,3-di-(9Z-octadecenoyl)-glycerol + CoA. It carries out the reaction 1-(9Z,12Z-octadecadienoyl)-glycerol + (9Z)-octadecenoyl-CoA = 1-(9Z-octadecenoyl)-3-(9Z,12Z-octadecadienoyl)-glycerol + CoA. It catalyses the reaction 1-(9Z,12Z,15Z-octadecatrienoyl)-glycerol + (9Z)-octadecenoyl-CoA = 1-(9Z,12Z,15Z-octadecatrienoyl)-3-(9Z-octadecenoyl)-glycerol + CoA. The catalysed reaction is a 1-acyl-sn-glycerol + an acyl-CoA = a 1,3-diacyl-sn-glycerol + CoA. The enzyme catalyses a 3-acyl-sn-glycerol + an acyl-CoA = a 1,3-diacyl-sn-glycerol + CoA. It carries out the reaction 3-octadecanoyl-sn-glycerol + (9Z)-octadecenoyl-CoA = 1-(9Z-octadecenoyl)-3-octadecanoyl-sn-glycerol + CoA. It functions in the pathway glycerolipid metabolism; triacylglycerol biosynthesis. In terms of biological role, involved in glycerolipid synthesis and lipid metabolism. Catalyzes the formation of diacylglycerol, the precursor of triacylglycerol, by transferring the acyl chain of a fatty acyl-CoA to a monoacylglycerol, mainly at the sn-1 or sn-3 positions. It uses both sn-2-monoacylglycerol (2-acylglycerol) and sn-1-monoacylglycerol (1-acyl-sn-glycerol) equally well as substrates, and uses sn-3-monoacylglycerol (3-acyl-sn-glycerol) with lower efficiency. Probably not involved in absorption of dietary fat in the small intestine. The sequence is that of 2-acylglycerol O-acyltransferase 1 from Mus musculus (Mouse).